Here is a 389-residue protein sequence, read N- to C-terminus: GTPase Obg (389 aa).

The region spanning 1–159 is the Obg domain; sequence MKFVDEAVIR…RSLKLELMLL (159 aa). The disordered stretch occupies residues 122 to 144; sequence FHGLGNTRFKSSTNRAPRQKTLG. Positions 160–333 constitute an OBG-type G domain; sequence ADVGLLGMPN…LSLKLIDFIE (174 aa). GTP-binding positions include 166–173, 191–195, 213–216, 283–286, and 314–316; these read GMPNAGKS, FTTLV, DIPG, NKTD, and SAY. The Mg(2+) site is built by Ser-173 and Thr-193.

It belongs to the TRAFAC class OBG-HflX-like GTPase superfamily. OBG GTPase family. Monomer. Mg(2+) is required as a cofactor.

It localises to the cytoplasm. An essential GTPase which binds GTP, GDP and possibly (p)ppGpp with moderate affinity, with high nucleotide exchange rates and a fairly low GTP hydrolysis rate. Plays a role in control of the cell cycle, stress response, ribosome biogenesis and in those bacteria that undergo differentiation, in morphogenesis control. The polypeptide is GTPase Obg (Shewanella woodyi (strain ATCC 51908 / MS32)).